The primary structure comprises 448 residues: Signal recognition particle protein (448 aa).

GTP-binding positions include 101 to 108 (GLQGSGKT), 182 to 186 (DSAGR), and 240 to 243 (SKFD).

It belongs to the GTP-binding SRP family. SRP54 subfamily. As to quaternary structure, part of the signal recognition particle protein translocation system, which is composed of SRP and FtsY. SRP is a ribonucleoprotein composed of Ffh and a 4.5S RNA molecule.

The protein resides in the cytoplasm. The enzyme catalyses GTP + H2O = GDP + phosphate + H(+). Its function is as follows. Involved in targeting and insertion of nascent membrane proteins into the cytoplasmic membrane. Binds to the hydrophobic signal sequence of the ribosome-nascent chain (RNC) as it emerges from the ribosomes. The SRP-RNC complex is then targeted to the cytoplasmic membrane where it interacts with the SRP receptor FtsY. Interaction with FtsY leads to the transfer of the RNC complex to the Sec translocase for insertion into the membrane, the hydrolysis of GTP by both Ffh and FtsY, and the dissociation of the SRP-FtsY complex into the individual components. This is Signal recognition particle protein from Helicobacter pylori (strain J99 / ATCC 700824) (Campylobacter pylori J99).